Consider the following 464-residue polypeptide: Protein FAM90A5 (464 aa).

Disordered regions lie at residues 16–42, 70–389, and 415–437; these read RAQTLQKQRRAPVGPRAPPPDEEDPRL, PATL…HDGA, and HSPEKPGAFLAQSPHVSEKSEAP. Composition is skewed to basic and acidic residues over residues 74–89 and 97–114; these read GKKEGKENLKPWKPRV and NKDKGEKEERPRQQDPQR. Residues 180–197 show a composition bias toward low complexity; sequence LASLSPLRKASLSSSSSL.

It belongs to the FAM90 family.

This Homo sapiens (Human) protein is Protein FAM90A5.